We begin with the raw amino-acid sequence, 216 residues long: Regulator of G-protein signaling 19 (216 aa).

A compositionally biased stretch (basic and acidic residues) spans M1–R19. The segment at M1–P30 is disordered. Phosphoserine; by CK2 is present on S24. Residues S90 to L206 form the RGS domain. Position 97 is a phosphoserine (S97). S151 bears the Phosphoserine; by MAPK1 and MAPK3 mark. Residues L207 to A216 are interaction with GIPC.

In terms of assembly, interacts with GIPC PDZ domain. Interacts with GNAO1. Fatty acylated. Heavily palmitoylated in the cysteine string motif. Post-translationally, phosphorylated, mainly on serine residues.

The protein localises to the membrane. Inhibits signal transduction by increasing the GTPase activity of G protein alpha subunits thereby driving them into their inactive GDP-bound form. Binds to G-alpha subfamily 1 members, predominantly to G(i)-alpha-3. Activity on G(z)-alpha is inhibited by phosphorylation and palmitoylation of the G-protein. The chain is Regulator of G-protein signaling 19 (Rgs19) from Rattus norvegicus (Rat).